The primary structure comprises 490 residues: Stomatal closure-related actin-binding protein 3 (490 aa).

The protein belongs to the SCAB family. Expressed in roots, stems, leaves, siliques and flowers.

Its subcellular location is the cytoplasm. The protein localises to the cytoskeleton. Probable plant-specific actin binding protein that bundles and stabilizes microfilaments (MFs). This chain is Stomatal closure-related actin-binding protein 3, found in Arabidopsis thaliana (Mouse-ear cress).